Consider the following 87-residue polypeptide: Putative sodium channel toxin Ts40 (87 aa).

Positions 1–19 are cleaved as a signal peptide; the sequence is MTALFYLLFLTSVIIETHQ. 3 disulfide bridges follow: Cys41/Cys63, Cys47/Cys68, and Cys51/Cys70.

The protein belongs to the long (4 C-C) scorpion toxin superfamily. Sodium channel inhibitor family. Expressed by the venom gland.

It localises to the secreted. Its function is as follows. Putative sodium channel toxin. The polypeptide is Putative sodium channel toxin Ts40 (Tityus serrulatus (Brazilian scorpion)).